The chain runs to 460 residues: MKVGILDSTLREGEQTPGVVFTIDQRVEIAKALSDVGVQMIEAGHPAVSSDIYEGIKRIMKLKREGLITSEIVGHSRAVKKDIEVAAELEVDRIAIFYGVSDIHLKAKHHVTREEALNIIAETISYAKSHGVKVRFTAEDGSRTDLDYLIKVCKTARDAGADRVSIADTVGILYPTKTRELFSTLVREVPGLEFDIHAHNDLGLAVANALAAIEGGATIIHTTVNGLGERVGIVPLQVIAAAIKYHFGIEVVKLNKLQQLASLVEKYSGIPMPPNYPITGDYAFIHKAGIHVAGVLNDPSTYEFMPPETFGRSRDYVIDKYTGKHALKDRFEKLGVKLSDVELDQVLAKIKSNPNVRFYRDVDLLEIAESVTGRVLKPKPPENIEALISVKCESNVYTTAVTRRLSVIPGVKEVMEISGDYDILVKVEAKDPNELNQIIENIRAVKGVSSTLTSLVLKKM.

The region spanning 3–258 (VGILDSTLRE…IEVVKLNKLQ (256 aa)) is the Pyruvate carboxyltransferase domain. Residue Arg11 participates in 2-oxoglutarate binding. Residue Glu12 participates in Mg(2+) binding. Residues His75, Arg135, and Thr169 each contribute to the 2-oxoglutarate site. The Mg(2+) site is built by His197 and His199. His291 acts as the Proton acceptor in catalysis.

This sequence belongs to the alpha-IPM synthase/homocitrate synthase family. Homocitrate synthase LYS20/LYS21 subfamily. In terms of assembly, forms a homotetramer in the absence of lysine, and is in hexadecamer-octamer equilibrium in the presence of lysine. Mg(2+) is required as a cofactor. Requires Mn(2+) as cofactor.

It catalyses the reaction acetyl-CoA + 2-oxoglutarate + H2O = (2R)-homocitrate + CoA + H(+). Its pathway is amino-acid biosynthesis; L-lysine biosynthesis via AAA pathway; L-alpha-aminoadipate from 2-oxoglutarate: step 1/5. Its activity is regulated as follows. Inhibited by lysine. Its function is as follows. Catalyzes the aldol-type condensation of 2-oxoglutarate with acetyl-CoA to yield homocitrate. Carries out the first step of the alpha-aminoadipate (AAA) lysine biosynthesis pathway. The chain is Homocitrate synthase from Sulfurisphaera tokodaii (strain DSM 16993 / JCM 10545 / NBRC 100140 / 7) (Sulfolobus tokodaii).